Consider the following 276-residue polypeptide: 4-hydroxy-3-methylbut-2-enyl diphosphate reductase (276 aa).

Cysteine 12 serves as a coordination point for [4Fe-4S] cluster. Positions 36 and 71 each coordinate (2E)-4-hydroxy-3-methylbut-2-enyl diphosphate. Residues histidine 36 and histidine 71 each contribute to the dimethylallyl diphosphate site. Isopentenyl diphosphate-binding residues include histidine 36 and histidine 71. Cysteine 93 serves as a coordination point for [4Fe-4S] cluster. Histidine 121 serves as a coordination point for (2E)-4-hydroxy-3-methylbut-2-enyl diphosphate. Dimethylallyl diphosphate is bound at residue histidine 121. Histidine 121 lines the isopentenyl diphosphate pocket. Residue glutamate 123 is the Proton donor of the active site. Threonine 160 lines the (2E)-4-hydroxy-3-methylbut-2-enyl diphosphate pocket. Cysteine 188 contacts [4Fe-4S] cluster. Positions 216, 217, 218, and 259 each coordinate (2E)-4-hydroxy-3-methylbut-2-enyl diphosphate. Dimethylallyl diphosphate is bound by residues serine 216, serine 217, asparagine 218, and serine 259. Isopentenyl diphosphate contacts are provided by serine 216, serine 217, asparagine 218, and serine 259.

The protein belongs to the IspH family. Requires [4Fe-4S] cluster as cofactor.

It carries out the reaction isopentenyl diphosphate + 2 oxidized [2Fe-2S]-[ferredoxin] + H2O = (2E)-4-hydroxy-3-methylbut-2-enyl diphosphate + 2 reduced [2Fe-2S]-[ferredoxin] + 2 H(+). It catalyses the reaction dimethylallyl diphosphate + 2 oxidized [2Fe-2S]-[ferredoxin] + H2O = (2E)-4-hydroxy-3-methylbut-2-enyl diphosphate + 2 reduced [2Fe-2S]-[ferredoxin] + 2 H(+). Its pathway is isoprenoid biosynthesis; dimethylallyl diphosphate biosynthesis; dimethylallyl diphosphate from (2E)-4-hydroxy-3-methylbutenyl diphosphate: step 1/1. The protein operates within isoprenoid biosynthesis; isopentenyl diphosphate biosynthesis via DXP pathway; isopentenyl diphosphate from 1-deoxy-D-xylulose 5-phosphate: step 6/6. Its function is as follows. Catalyzes the conversion of 1-hydroxy-2-methyl-2-(E)-butenyl 4-diphosphate (HMBPP) into a mixture of isopentenyl diphosphate (IPP) and dimethylallyl diphosphate (DMAPP). Acts in the terminal step of the DOXP/MEP pathway for isoprenoid precursor biosynthesis. In Nautilia profundicola (strain ATCC BAA-1463 / DSM 18972 / AmH), this protein is 4-hydroxy-3-methylbut-2-enyl diphosphate reductase.